Consider the following 602-residue polypeptide: MFS-type efflux transporter pyiT (602 aa).

Positions 1–33 are disordered; sequence MEKAKDSLPTTGDPVPSQGTINPVDETGGSASD. 7 helical membrane passes run 43–63, 123–143, 156–176, 185–205, 212–232, 251–271, and 282–302; these read FWFT…EGSV, WLTI…GGAT, GLGS…LLPL, IIFM…GILV, WVFY…FFFL, FFGN…LTYG, and IIVS…FEAS. Asparagine 317 carries an N-linked (GlcNAc...) asparagine glycan. 6 consecutive transmembrane segments (helical) span residues 325-345, 357-377, 386-406, 410-430, 451-471, and 524-544; these read IATF…PLYF, GVML…GGAL, NIHF…TILN, SLAV…VPTA, TFAF…AAIF, and LERV…VIFL. Residues 564-585 are compositionally biased toward polar residues; the sequence is IPQTAADNSASRPNTINDTASQ. A disordered region spans residues 564–602; that stretch reads IPQTAADNSASRPNTINDTASQAPILKQRRSTNQERETV. Asparagine 580 is a glycosylation site (N-linked (GlcNAc...) asparagine).

Belongs to the major facilitator superfamily.

Its subcellular location is the cell membrane. Its function is as follows. MFS-type efflux transporter; part of the gene cluster that mediates the biosynthesis of the mycotoxin pyrichalasin H, a tyrosine-derived cytochalasan that inhibits the growth of rice seedlings, but also inhibits lymphocyte capping and actin polymerization and alters cell morphology. Pyrichalasin H is indicated as the responsible agent for the genus-specific pathogenicity of M.grisea toward crabgrass. PyiT might be involved in the excretion of pyrichalasin H. This chain is MFS-type efflux transporter pyiT, found in Pyricularia grisea (Crabgrass-specific blast fungus).